Reading from the N-terminus, the 242-residue chain is Type III pantothenate kinase (242 aa).

ATP is bound at residue 7–14; it reads DLGNSRFK. Residues Y91 and 98 to 101 each bind substrate; that span reads GVDR. The Proton acceptor role is filled by D100. T121 serves as a coordination point for ATP. T171 contributes to the substrate binding site.

This sequence belongs to the type III pantothenate kinase family. In terms of assembly, homodimer. NH4(+) is required as a cofactor. Requires K(+) as cofactor.

The protein localises to the cytoplasm. The enzyme catalyses (R)-pantothenate + ATP = (R)-4'-phosphopantothenate + ADP + H(+). It functions in the pathway cofactor biosynthesis; coenzyme A biosynthesis; CoA from (R)-pantothenate: step 1/5. In terms of biological role, catalyzes the phosphorylation of pantothenate (Pan), the first step in CoA biosynthesis. This is Type III pantothenate kinase from Xanthomonas axonopodis pv. citri (strain 306).